We begin with the raw amino-acid sequence, 107 residues long: UPF0122 protein MYPE4850 (107 aa).

This sequence belongs to the UPF0122 family.

Functionally, might take part in the signal recognition particle (SRP) pathway. This is inferred from the conservation of its genetic proximity to ftsY/ffh. May be a regulatory protein. The protein is UPF0122 protein MYPE4850 of Malacoplasma penetrans (strain HF-2) (Mycoplasma penetrans).